Here is a 389-residue protein sequence, read N- to C-terminus: Na(+)/H(+) antiporter NhaA (389 aa).

The next 11 membrane-spanning stretches (helical) occupy residues Ile-17–Leu-37, Leu-59–Val-79, Ser-95–Phe-115, Val-124–Leu-144, Val-154–Phe-174, Ser-177–Leu-197, Leu-213–Ile-233, Phe-261–Leu-281, Pro-287–Phe-307, Ile-328–Leu-348, and Leu-363–Val-383.

It belongs to the NhaA Na(+)/H(+) (TC 2.A.33) antiporter family.

The protein resides in the cell inner membrane. The enzyme catalyses Na(+)(in) + 2 H(+)(out) = Na(+)(out) + 2 H(+)(in). In terms of biological role, na(+)/H(+) antiporter that extrudes sodium in exchange for external protons. This is Na(+)/H(+) antiporter NhaA from Shewanella sp. (strain ANA-3).